Here is a 260-residue protein sequence, read N- to C-terminus: tRNA (guanine-N(1)-)-methyltransferase (260 aa).

S-adenosyl-L-methionine is bound by residues Gly-117 and 137 to 142 (LGDFVL).

It belongs to the RNA methyltransferase TrmD family. As to quaternary structure, homodimer.

Its subcellular location is the cytoplasm. The catalysed reaction is guanosine(37) in tRNA + S-adenosyl-L-methionine = N(1)-methylguanosine(37) in tRNA + S-adenosyl-L-homocysteine + H(+). Specifically methylates guanosine-37 in various tRNAs. This is tRNA (guanine-N(1)-)-methyltransferase from Cupriavidus taiwanensis (strain DSM 17343 / BCRC 17206 / CCUG 44338 / CIP 107171 / LMG 19424 / R1) (Ralstonia taiwanensis (strain LMG 19424)).